Consider the following 1102-residue polypeptide: Probable leucine-rich repeat receptor-like protein kinase At5g63930 (1102 aa).

The N-terminal stretch at 1 to 26 is a signal peptide; the sequence is MVKEMMKLAVFFISLLLILLISETTG. Residues 27-737 lie on the Extracellular side of the membrane; it reads LNLEGQYLLE…GKPGGMRSSK (711 aa). Residues Asn-54, Asn-68, Asn-79, and Asn-119 are each glycosylated (N-linked (GlcNAc...) asparagine). 26 LRR repeats span residues 72–96, 97–120, 122–144, 145–170, 172–192, 193–216, 217–241, 243–264, 265–288, 289–312, 314–336, 337–360, 361–383, 385–408, 409–432, 433–456, 458–480, 481–504, 505–528, 529–552, 554–576, 577–602, 604–624, 625–649, 651–672, and 674–700; these read DPEVLSLNLSSMVLSGKLSPSIGGL, VHLKQLDLSYNGLSGKIPKEIGNC, SLEILKLNNNQFDGEIPVEIGKL, VSLENLIIYNNRISGSLPVEIGNLLS, SQLVTYSNNISGQLPRSIGNL, KRLTSFRAGQNMISGSLPSEIGGC, ESLVMLGLAQNQLSGELPKEIGMLK, LSQVILWENEFSGFIPREISNC, TSLETLALYKNQLVGPIPKELGDL, QSLEFLYLYRNGLNGTIPREIGNL, YAIEIDFSENALTGEIPLELGNI, EGLELLYLFENQLTGTIPVELSTL, KNLSKLDLSINALTGPIPLGFQY, RGLFMLQLFQNSLSGTIPPKLGWY, SDLWVLDMSDNHLSGRIPSYLCLH, SNMIILNLGTNNLSGNIPTGITTC, TLVQLRLARNNLVGRFPSNLCKQ, VNVTAIELGQNRFRGSIPREVGNC, SALQRLQLADNGFTGELPREIGML, SQLGTLNISSNKLTGEVPSEIFNC, MLQRLDMCCNNFSGTLPSEVGSL, YQLELLKLSNNNLSGTIPVALGNLSR, TELQMGGNLFNGSIPRELGSL, TGLQIALNLSYNKLTGEIPPELSNL, MLEFLLLNNNNLSGEIPSSFAN, and SSLLGYNFSYNSLTGPIPLLRNISMSS. Residue Asn-180 is glycosylated (N-linked (GlcNAc...) asparagine). N-linked (GlcNAc...) asparagine glycosylation is present at Asn-263. Residues Asn-302 and Asn-311 are each glycosylated (N-linked (GlcNAc...) asparagine). Asn-362 carries N-linked (GlcNAc...) asparagine glycosylation. Asn-444 carries N-linked (GlcNAc...) asparagine glycosylation. N-linked (GlcNAc...) asparagine glycosylation is found at Asn-482 and Asn-503. Residues Asn-535, Asn-564, Asn-588, Asn-599, Asn-614, Asn-632, Asn-661, Asn-672, Asn-680, and Asn-695 are each glycosylated (N-linked (GlcNAc...) asparagine). Residues 738-758 traverse the membrane as a helical segment; it reads IIAITAAVIGGVSLMLIALIV. At 759 to 1102 the chain is on the cytoplasmic side; sequence YLMRRPVRTV…TEELTQTTTP (344 aa). A phosphothreonine mark is found at Thr-793 and Thr-801. The region spanning 804 to 1091 is the Protein kinase domain; it reads FDESFVVGRG…ERSEGEQEHL (288 aa). Residues 810 to 818 and Lys-832 contribute to the ATP site; that span reads VGRGACGTV. Tyr-882 and Tyr-919 each carry phosphotyrosine. Asp-932 acts as the Proton acceptor in catalysis. Residue Ser-966 is modified to Phosphoserine. Tyr-974 and Tyr-981 each carry phosphotyrosine. Residue Thr-982 is modified to Phosphothreonine.

It belongs to the protein kinase superfamily. Ser/Thr protein kinase family.

The protein localises to the cell membrane. It catalyses the reaction L-seryl-[protein] + ATP = O-phospho-L-seryl-[protein] + ADP + H(+). The enzyme catalyses L-threonyl-[protein] + ATP = O-phospho-L-threonyl-[protein] + ADP + H(+). In Arabidopsis thaliana (Mouse-ear cress), this protein is Probable leucine-rich repeat receptor-like protein kinase At5g63930.